The sequence spans 590 residues: 4-oxocyclohex-2-ene-1-carboxylate 5-dehydrogenase (590 aa).

Belongs to the FAD-dependent oxidoreductase 2 family. In terms of assembly, forms multimers. FAD is required as a cofactor.

It catalyses the reaction 4-oxocyclohex-2-ene-1-carboxylate + NAD(+) = 4-oxocyclohexa-2,5-diene-1-carboxylate + NADH + H(+). Functionally, desaturase involved in a cyclohexanecarboxylate (CHCA) degradation pathway. Probably catalyzes the conversion of 4-oxocyclohexenecarboxylate to 4-oxocyclohex-2,5-dienecarboxylate, which is spontaneously isomerized to 4-hydroxybenzoate (4-HBA). This chain is 4-oxocyclohex-2-ene-1-carboxylate 5-dehydrogenase, found in Sinomonas cyclohexanicum (Corynebacterium cyclohexanicum).